A 130-amino-acid chain; its full sequence is Small ribosomal subunit protein uS8 (130 aa).

Belongs to the universal ribosomal protein uS8 family. As to quaternary structure, part of the 30S ribosomal subunit.

Functionally, one of the primary rRNA binding proteins, it binds directly to 16S rRNA central domain where it helps coordinate assembly of the platform of the 30S subunit. The polypeptide is Small ribosomal subunit protein uS8 (Nitrosopumilus maritimus (strain SCM1)).